The following is a 591-amino-acid chain: Complement component C8 beta chain (591 aa).

Positions 1 to 32 (MKNSRTWAWRAPVELFLLCAALGCLSLPGSRG) are cleaved as a signal peptide. Positions 33–54 (ERPHSFGSNAVNKSFAKSRQMR) are excised as a propeptide. Residues 64-117 (DCELSSWSSWTTCDPCQKKRYRYAYLLQPSQFHGEPCNFSDKEVEDCVTNRPCG) form the TSP type-1 1 domain. Disulfide bonds link C65-C100, C76-C110, C79-C116, C122-C133, C127-C146, C140-C155, and C162-C200. C-linked (Man) tryptophan glycosylation is found at W70 and W73. N101 is a glycosylation site (N-linked (GlcNAc...) asparagine). Residues 120-157 (VRCEGFVCAQTGRCVNRRLLCNGDNDCGDQSDEANCRR) enclose the LDL-receptor class A domain. Residues L138, N141, D143, D145, D151, and E152 each contribute to the Ca(2+) site. One can recognise an MACPF domain in the interval 158–504 (IYKKCQHEMD…EFQKEVSSCH (347 aa)). N243 carries N-linked (GlcNAc...) asparagine glycosylation. 4 consecutive transmembrane segments (beta stranded) span residues 252 to 259 (SGFSFGFK), 262 to 269 (GIFELGIS), 379 to 386 (AKNDFKIG), and 392 to 399 (VYVSLGVS). C378 and C403 are oxidised to a cystine. The residue at position 418 (T418) is a Phosphothreonine. 4 cysteine pairs are disulfide-bonded: C503-C550, C505-C521, C508-C523, and C525-C534. The 31-residue stretch at 505–535 (CAPCQGNGVPVLKGSRCDCICPVGSQGLACE) folds into the EGF-like domain. The TSP type-1 2 domain occupies 545-591 (DGKWNCWSNWSSCSGRRKTRQRQCNNPPPQNGGSPCSGPASETLDCS). W551 and W554 each carry a C-linked (Man) tryptophan glycan. An intrachain disulfide couples C557 to C590. The interval 568-591 (CNNPPPQNGGSPCSGPASETLDCS) is disordered.

It belongs to the complement C6/C7/C8/C9 family. Heterotrimer of 3 chains: alpha (C8A), beta (C8B) and gamma (C8G); the alpha and gamma chains are disulfide bonded. Component of the membrane attack complex (MAC), composed of complement C5b, C6, C7, C8A, C8B, C8G and multiple copies of the pore-forming subunit C9. Post-translationally, N-glycosylated; contains one or two bound glycans. Not O-glycosylated.

The protein resides in the secreted. It localises to the target cell membrane. Its activity is regulated as follows. Membrane attack complex (MAC) assembly is inhibited by CD59, thereby protecting self-cells from damage during complement activation. CD59 acts by binding to the beta-haipins of C8 (C8A and C8B), forming an intermolecular beta-sheet that prevents incorporation of the multiple copies of C9 required for complete formation of the osmolytic pore. MAC assembly is also inhibited by clusterin (CLU) chaperones that inhibit polymerization of C9. In terms of biological role, component of the membrane attack complex (MAC), a multiprotein complex activated by the complement cascade, which inserts into a target cell membrane and forms a pore, leading to target cell membrane rupture and cell lysis. The MAC is initiated by proteolytic cleavage of C5 into complement C5b in response to the classical, alternative, lectin and GZMK complement pathways. The complement pathways consist in a cascade of proteins that leads to phagocytosis and breakdown of pathogens and signaling that strengthens the adaptive immune system. C8B, together with C8A and C8G, inserts into the target membrane, but does not form pores by itself. During MAC assembly, associates with C5b, C6 and C7 to form the C5b8 intermediate complex that inserts into the target membrane and traverses the bilayer increasing membrane rigidity. This is Complement component C8 beta chain from Homo sapiens (Human).